The chain runs to 495 residues: Phage-like element PBSX protein XkdE (495 aa).

It belongs to the phage portal family. PBSX subfamily.

The sequence is that of Phage-like element PBSX protein XkdE (xkdE) from Bacillus subtilis (strain 168).